We begin with the raw amino-acid sequence, 457 residues long: Multidrug resistance protein MdtK (457 aa).

12 consecutive transmembrane segments (helical) span residues 11-31, 53-73, 93-113, 127-147, 160-180, 188-208, 239-259, 277-297, 316-336, 357-377, 387-407, and 418-438; these read LLAL…MGFV, IWLP…PVIA, WLVA…GHII, AIGY…FQVL, GMVI…IFIY, LGGV…YLLM, IAIG…FAVV, ALNF…AATI, RTAI…TIVL, LMLL…GSGV, IFFI…YLLA, and PSGF…MMAL.

It belongs to the multi antimicrobial extrusion (MATE) (TC 2.A.66.1) family. MdtK subfamily.

The protein resides in the cell inner membrane. In terms of biological role, multidrug efflux pump that functions probably as a Na(+)/drug antiporter. The sequence is that of Multidrug resistance protein MdtK from Edwardsiella ictaluri (strain 93-146).